A 326-amino-acid polypeptide reads, in one-letter code: Apoptosis facilitator Bcl-2-like protein 14 (326 aa).

At S44 the chain carries Phosphoserine. The segment at 99–127 (TEKEEEPPSSPKEIHAQGPFPVERQGRNQ) is disordered. The BH3 signature appears at 211–225 (IVELLKYSGDQLGRE). Positions 307 to 314 (WVQQNGGW) match the BH2 motif.

This sequence belongs to the Bcl-2 family. In terms of processing, phosphorylated by MELK, leading to inhibit its pro-apoptotic function.

The protein resides in the cytoplasm. Functionally, plays a role in apoptosis. In Rattus norvegicus (Rat), this protein is Apoptosis facilitator Bcl-2-like protein 14 (Bcl2l14).